Reading from the N-terminus, the 565-residue chain is Anaphase-promoting complex subunit 7 (565 aa).

TPR repeat units follow at residues 101-134 (EIEV…RQRT), 169-202 (LDAI…LDWL), 203-236 (SVWI…LRDN), 237-270 (VDLL…DPYL), 339-372 (VQAL…APCR), 373-406 (LDCY…LGAN), 407-439 (AQTL…AQRP), 442-474 (VKAV…NQSD), 475-508 (CVLH…DPND), and 509-531 (QKSL…TQEE). Lys229 is modified (N6-acetyllysine). A compositionally biased stretch (basic and acidic residues) spans 513 to 523 (EGMQKMEKEES). The tract at residues 513 to 565 (EGMQKMEKEESPTDATQEEDVDDMEGSGEEGDLEGSDSEAAQWADQEQWFGMQ) is disordered. Acidic residues predominate over residues 528 to 549 (TQEEDVDDMEGSGEEGDLEGSD).

Belongs to the APC7 family. In terms of assembly, V-shaped homodimer. The mammalian APC/C is composed at least of 14 distinct subunits ANAPC1, ANAPC2, CDC27/APC3, ANAPC4, ANAPC5, CDC16/APC6, ANAPC7, CDC23/APC8, ANAPC10, ANAPC11, CDC26/APC12, ANAPC13, ANAPC15 and ANAPC16 that assemble into a complex of at least 19 chains with a combined molecular mass of around 1.2 MDa; APC/C interacts with FZR1 and FBXO5.

Its subcellular location is the cytoplasm. It is found in the cytoskeleton. It localises to the nucleus. The protein resides in the spindle. It participates in protein modification; protein ubiquitination. Its function is as follows. Component of the anaphase promoting complex/cyclosome (APC/C), a cell cycle-regulated E3 ubiquitin ligase that controls progression through mitosis and the G1 phase of the cell cycle. The APC/C complex acts by mediating ubiquitination and subsequent degradation of target proteins: it mainly mediates the formation of 'Lys-11'-linked polyubiquitin chains and, to a lower extent, the formation of 'Lys-48'- and 'Lys-63'-linked polyubiquitin chains. The APC/C complex catalyzes assembly of branched 'Lys-11'-/'Lys-48'-linked branched ubiquitin chains on target proteins. APC7 is not required for the assembly of the APC/C complex, but has an enzyme-substrate adapter activity mediating the processive ubiquitination of specific substrates. Involved in brain development through the specific ubiquitination and clearance of MKI67 from constitutive heterochromatin after neuronal progenitors exit mitosis. The polypeptide is Anaphase-promoting complex subunit 7 (Anapc7) (Mus musculus (Mouse)).